The following is a 443-amino-acid chain: ATP-dependent protease ATPase subunit HslU (443 aa).

ATP contacts are provided by residues Ile18, 60–65, Asp256, Glu321, and Arg393; that span reads GVGKTE.

The protein belongs to the ClpX chaperone family. HslU subfamily. As to quaternary structure, a double ring-shaped homohexamer of HslV is capped on each side by a ring-shaped HslU homohexamer. The assembly of the HslU/HslV complex is dependent on binding of ATP.

Its subcellular location is the cytoplasm. In terms of biological role, ATPase subunit of a proteasome-like degradation complex; this subunit has chaperone activity. The binding of ATP and its subsequent hydrolysis by HslU are essential for unfolding of protein substrates subsequently hydrolyzed by HslV. HslU recognizes the N-terminal part of its protein substrates and unfolds these before they are guided to HslV for hydrolysis. The chain is ATP-dependent protease ATPase subunit HslU from Pectobacterium carotovorum subsp. carotovorum (strain PC1).